Here is a 778-residue protein sequence, read N- to C-terminus: IQ domain-containing protein E (778 aa).

2 disordered regions span residues Met-1 to Arg-71 and Ser-83 to Ser-108. Over residues Lys-37–Ser-49 the composition is skewed to low complexity. Positions Ser-83–His-101 are enriched in polar residues. Residues Leu-157–Pro-323 are a coiled coil. Residue Ser-322 is modified to Phosphoserine. Disordered regions lie at residues Lys-348 to Pro-392, Glu-443 to Glu-462, Glu-474 to Arg-529, and Leu-573 to Asn-612. Over residues Ser-352–Glu-362 the composition is skewed to low complexity. The stretch at Glu-398–Ala-486 forms a coiled coil. IQ domains follow at residues Leu-553 to Arg-582 and Gln-615 to Ala-644. Residues Ser-581–Pro-598 are compositionally biased toward low complexity. The segment covering Thr-651–Pro-662 has biased composition (polar residues). A disordered region spans residues Thr-651–Phe-778. The residue at position 661 (Ser-661) is a Phosphoserine. Over residues Ile-672–Ser-686 the composition is skewed to basic and acidic residues. The span at Pro-739 to Val-752 shows a compositional bias: pro residues.

In terms of assembly, component of the EvC complex composed of EFCAB7, IQCE, EVC2 and EVC; built from two subcomplexes, EVC2:EVC and EFCAB7:IQCE. Interacts (via N-terminus) with EFCAB7 (via EF-hands 1 and 2); this interaction anchors the EVC-EVC2 complex in a signaling microdomain at the base of cilia and stimulates the Hedgehog (Hh) pathway. Interacts with EVC2 (via N-terminal end). Interacts with EVC.

The protein localises to the cell projection. It localises to the cilium membrane. Component of the EvC complex that positively regulates ciliary Hedgehog (Hh) signaling. Required for proper limb morphogenesis. In Mus musculus (Mouse), this protein is IQ domain-containing protein E (Iqce).